A 509-amino-acid polypeptide reads, in one-letter code: ATP synthase subunit alpha (509 aa).

169 to 176 (GDRQTGKT) contributes to the ATP binding site.

It belongs to the ATPase alpha/beta chains family. In terms of assembly, F-type ATPases have 2 components, CF(1) - the catalytic core - and CF(0) - the membrane proton channel. CF(1) has five subunits: alpha(3), beta(3), gamma(1), delta(1), epsilon(1). CF(0) has three main subunits: a(1), b(2) and c(9-12). The alpha and beta chains form an alternating ring which encloses part of the gamma chain. CF(1) is attached to CF(0) by a central stalk formed by the gamma and epsilon chains, while a peripheral stalk is formed by the delta and b chains.

The protein localises to the cell inner membrane. It carries out the reaction ATP + H2O + 4 H(+)(in) = ADP + phosphate + 5 H(+)(out). Produces ATP from ADP in the presence of a proton gradient across the membrane. The alpha chain is a regulatory subunit. In Brucella ovis (strain ATCC 25840 / 63/290 / NCTC 10512), this protein is ATP synthase subunit alpha.